The following is a 339-amino-acid chain: DNA-directed RNA polymerase subunit alpha (339 aa).

Residues 1-233 form an alpha N-terminal domain (alpha-NTD) region; it reads MVREEVAGST…DLFLPFLHAE (233 aa). The tract at residues 264 to 339 is alpha C-terminal domain (alpha-CTD); sequence KKGIPLNCIF…IDLLKNKLSF (76 aa).

Belongs to the RNA polymerase alpha chain family. In terms of assembly, in plastids the minimal PEP RNA polymerase catalytic core is composed of four subunits: alpha, beta, beta', and beta''. When a (nuclear-encoded) sigma factor is associated with the core the holoenzyme is formed, which can initiate transcription.

It localises to the plastid. The protein localises to the chloroplast. It catalyses the reaction RNA(n) + a ribonucleoside 5'-triphosphate = RNA(n+1) + diphosphate. In terms of biological role, DNA-dependent RNA polymerase catalyzes the transcription of DNA into RNA using the four ribonucleoside triphosphates as substrates. The protein is DNA-directed RNA polymerase subunit alpha of Heteranthelium piliferum (Elymus pilifer).